The primary structure comprises 418 residues: Tyrosine--tRNA ligase (418 aa).

An L-tyrosine-binding site is contributed by Y34. Positions 39–48 (PTADSLHLGH) match the 'HIGH' region motif. Y169 and Q173 together coordinate L-tyrosine. A 'KMSKS' region motif is present at residues 229-233 (KFGKS). Residue K232 coordinates ATP. The 67-residue stretch at 352-418 (NNIVELLVSS…GKKKYFVLTY (67 aa)) folds into the S4 RNA-binding domain.

This sequence belongs to the class-I aminoacyl-tRNA synthetase family. TyrS type 1 subfamily. As to quaternary structure, homodimer.

It is found in the cytoplasm. The catalysed reaction is tRNA(Tyr) + L-tyrosine + ATP = L-tyrosyl-tRNA(Tyr) + AMP + diphosphate + H(+). Functionally, catalyzes the attachment of tyrosine to tRNA(Tyr) in a two-step reaction: tyrosine is first activated by ATP to form Tyr-AMP and then transferred to the acceptor end of tRNA(Tyr). The protein is Tyrosine--tRNA ligase of Streptococcus pneumoniae (strain ATCC BAA-255 / R6).